We begin with the raw amino-acid sequence, 396 residues long: MARAKFLREKLHVNVGTIGHVDHGKTTLTAALTKIGAERFGGEFKAYDAIDAAPEEKARGITISTAHVEYESAVRHYAHVDCPGHADYVKNMITGAAQMDGAILVCSAADGPMPQTREHILLSRQVGVPHIVVFLNKADMVDDAELLELVEMEVRELLSKYDFPGDDTPIIHGSARLALEGDQSDIGVPAILKLVEALDTFIPDPTRDVDRPFLMPVEDVFSISGRGTVVTGRIERGIIRVGDEIEIVGIRDTHKTTVTGVEMFRKLLDQGQAGDNAGLLLRGTKRDDVERGQVLCKPGSIKPHTEFEAEVYVLSKDEGGRHTPFFKGYRPQFYFRTTDITGACQLPEGVEMVMPGDNVKMVVTLINPVAMDEGLRFAIREGGRTVGAGVVAKIVK.

The tr-type G domain occupies 10–206 (KLHVNVGTIG…ALDTFIPDPT (197 aa)). Residues 19-26 (GHVDHGKT) form a G1 region. 19–26 (GHVDHGKT) lines the GTP pocket. Mg(2+) is bound at residue Thr-26. Residues 60-64 (GITIS) are G2. The G3 stretch occupies residues 81–84 (DCPG). GTP is bound by residues 81–85 (DCPGH) and 136–139 (NKAD). The interval 136–139 (NKAD) is G4. The segment at 174–176 (SAR) is G5.

It belongs to the TRAFAC class translation factor GTPase superfamily. Classic translation factor GTPase family. EF-Tu/EF-1A subfamily. As to quaternary structure, monomer.

It is found in the cytoplasm. The enzyme catalyses GTP + H2O = GDP + phosphate + H(+). Its function is as follows. GTP hydrolase that promotes the GTP-dependent binding of aminoacyl-tRNA to the A-site of ribosomes during protein biosynthesis. This chain is Elongation factor Tu 1, found in Xanthomonas campestris pv. campestris (strain B100).